Here is a 469-residue protein sequence, read N- to C-terminus: 3-isopropylmalate dehydratase large subunit (469 aa).

Residues C349, C410, and C413 each coordinate [4Fe-4S] cluster.

This sequence belongs to the aconitase/IPM isomerase family. LeuC type 1 subfamily. In terms of assembly, heterodimer of LeuC and LeuD. The cofactor is [4Fe-4S] cluster.

The catalysed reaction is (2R,3S)-3-isopropylmalate = (2S)-2-isopropylmalate. The protein operates within amino-acid biosynthesis; L-leucine biosynthesis; L-leucine from 3-methyl-2-oxobutanoate: step 2/4. Catalyzes the isomerization between 2-isopropylmalate and 3-isopropylmalate, via the formation of 2-isopropylmaleate. The sequence is that of 3-isopropylmalate dehydratase large subunit from Azoarcus sp. (strain BH72).